Reading from the N-terminus, the 92-residue chain is Alpha-elapitoxin-As2a (92 aa).

The N-terminal stretch at 1–21 is a signal peptide; the sequence is MKTLLLTLVVVTIVCLDLGDG. Disulfide bonds link Cys-24–Cys-41, Cys-34–Cys-62, Cys-47–Cys-51, Cys-66–Cys-77, and Cys-78–Cys-83.

It belongs to the three-finger toxin family. Long-chain subfamily. Type II alpha-neurotoxin sub-subfamily. In terms of tissue distribution, expressed by the venom gland.

The protein localises to the secreted. Binds with high affinity to muscular (alpha-1/CHRNA1) and neuronal (alpha-7/CHRNA7) nicotinic acetylcholine receptor (nAChR) and inhibits acetylcholine from binding to the receptor, thereby impairing neuromuscular and neuronal transmission. This chain is Alpha-elapitoxin-As2a, found in Austrelaps superbus (Lowland copperhead snake).